The sequence spans 197 residues: Nucleoid occlusion factor SlmA (197 aa).

The HTH tetR-type domain occupies 7–67; it reads INRREHILQC…GLIEFIEDAI (61 aa). The segment at residues 30–49 is a DNA-binding region (H-T-H motif); the sequence is TTAKLAAEVGVSEAALYRHF. A coiled-coil region spans residues 110–130; the sequence is ALLGENERLRSRIDVLFAKIE.

Belongs to the nucleoid occlusion factor SlmA family. As to quaternary structure, homodimer. Interacts with FtsZ.

The protein localises to the cytoplasm. Its subcellular location is the nucleoid. Functionally, required for nucleoid occlusion (NO) phenomenon, which prevents Z-ring formation and cell division over the nucleoid. Acts as a DNA-associated cell division inhibitor that binds simultaneously chromosomal DNA and FtsZ, and disrupts the assembly of FtsZ polymers. SlmA-DNA-binding sequences (SBS) are dispersed on non-Ter regions of the chromosome, preventing FtsZ polymerization at these regions. The sequence is that of Nucleoid occlusion factor SlmA from Shewanella frigidimarina (strain NCIMB 400).